The sequence spans 256 residues: Indole-3-glycerol phosphate synthase (256 aa).

This sequence belongs to the TrpC family.

It carries out the reaction 1-(2-carboxyphenylamino)-1-deoxy-D-ribulose 5-phosphate + H(+) = (1S,2R)-1-C-(indol-3-yl)glycerol 3-phosphate + CO2 + H2O. It participates in amino-acid biosynthesis; L-tryptophan biosynthesis; L-tryptophan from chorismate: step 4/5. The protein is Indole-3-glycerol phosphate synthase of Chlorobaculum tepidum (strain ATCC 49652 / DSM 12025 / NBRC 103806 / TLS) (Chlorobium tepidum).